The following is a 306-amino-acid chain: Glutaminase (306 aa).

Positions 64, 115, 159, 166, 190, 242, and 260 each coordinate substrate.

This sequence belongs to the glutaminase family. In terms of assembly, homotetramer.

The enzyme catalyses L-glutamine + H2O = L-glutamate + NH4(+). The polypeptide is Glutaminase (Vibrio cholerae serotype O1 (strain ATCC 39315 / El Tor Inaba N16961)).